The sequence spans 418 residues: Sialidase-3 (418 aa).

The FRIP motif signature appears at 24 to 27 (YRIP). Substrate-binding residues include Arg25 and Arg45. Asp50 functions as the Proton acceptor in the catalytic mechanism. The BNR 1 repeat unit spans residues 129–140 (LCSEDAGCSWGE). Substrate is bound by residues Tyr179 and Tyr181. The BNR 2 repeat unit spans residues 203–214 (SDDFGVTWHHGK). Positions 223 and 243 each coordinate substrate. The BNR 3 repeat unit spans residues 254 to 265 (STDSGGCFQKPT). At Ser312 the chain carries Phosphoserine. Arg339 contributes to the substrate binding site. The active-site Nucleophile is the Tyr369. Glu386 is a catalytic residue.

This sequence belongs to the glycosyl hydrolase 33 family. As to quaternary structure, interacts with CAV1; this interaction enhances NEU3 sialidase activity within caveola. Interacts with EGFR; this interaction mediates desialylation of EGFR and enhances downstream signaling. Post-translationally, palmitoylated; may regulate intracellular trafficking and anchorage to plasma membrane and endomembranes. Expressed in heart, brain and cerebral cortex.

Its subcellular location is the cell membrane. It localises to the membrane. It is found in the caveola. The protein localises to the early endosome membrane. The protein resides in the recycling endosome membrane. Its subcellular location is the lysosome membrane. It catalyses the reaction Hydrolysis of alpha-(2-&gt;3)-, alpha-(2-&gt;6)-, alpha-(2-&gt;8)- glycosidic linkages of terminal sialic acid residues in oligosaccharides, glycoproteins, glycolipids, colominic acid and synthetic substrates.. It carries out the reaction a ganglioside GD1a + H2O = a ganglioside GM1 + N-acetylneuraminate. The catalysed reaction is a ganglioside GD1a (d18:1(4E)) + H2O = a ganglioside GM1 (d18:1(4E)) + N-acetylneuraminate. The enzyme catalyses a ganglioside GD1b + H2O = a ganglioside GM1 + N-acetylneuraminate. It catalyses the reaction a ganglioside GD1b (d18:1(4E)) + H2O = a ganglioside GM1 (d18:1(4E)) + N-acetylneuraminate. It carries out the reaction a ganglioside GD3 + H2O = a ganglioside GM3 + N-acetylneuraminate. The catalysed reaction is a ganglioside GD3 (d18:1(4E)) + H2O = a ganglioside GM3 (d18:1(4E)) + N-acetylneuraminate. The enzyme catalyses a ganglioside GM3 + H2O = a beta-D-galactosyl-(1-&gt;4)-beta-D-glucosyl-(1&lt;-&gt;1)-ceramide + N-acetylneuraminate. It catalyses the reaction a ganglioside GM1 + H2O = a ganglioside GA1 + N-acetylneuraminate. It carries out the reaction a ganglioside GM1 (d18:1(4E)) + H2O = a ganglioside GA1 (d18:1(4E)) + N-acetylneuraminate. The catalysed reaction is a ganglioside GM2 (d18:1(4E)) + H2O = a ganglioside GA2 (d18:1(4E)) + N-acetylneuraminate. The enzyme catalyses a ganglioside GM3 (d18:1(4E)) + H2O = a beta-D-Gal-(1-&gt;4)-beta-D-Glc-(1&lt;-&gt;1)-Cer(d18:1(4E)) + N-acetylneuraminate. It catalyses the reaction a ganglioside GT1b + H2O = a ganglioside GD1b + N-acetylneuraminate. Exo-alpha-sialidase that catalyzes the hydrolytic cleavage of the terminal sialic acid (N-acetylneuraminic acid, Neu5Ac) of a glycan moiety in the catabolism of glycolipids, glycoproteins and oligosacharides. Displays high catalytic efficiency for gangliosides including alpha-(2-&gt;3)-sialylated GD1a and GM3 and alpha-(2-&gt;8)-sialylated GD3. Plays a role in the regulation of transmembrane signaling through the modulation of ganglioside content of the lipid bilayer and by direct interaction with signaling receptors, such as EGFR. Desialylates EGFR and activates downstream signaling in proliferating cells. Contributes to clathrin-mediated endocytosis by regulating sorting of endocytosed receptors to early and recycling endosomes. This chain is Sialidase-3 (Neu3), found in Mus musculus (Mouse).